A 111-amino-acid chain; its full sequence is Histone H2A-Bbd type 1 (111 aa).

This sequence belongs to the histone H2A family. In terms of assembly, the nucleosome is a histone octamer containing two molecules each of H2A, H2B, H3 and H4 assembled in one H3-H4 heterotetramer and two H2A-H2B heterodimers. Incorporated into nucleosomes during late spermatogenesis. Interacts with H2BC1/TH2B; preferentially dimerizes with H2BC1/TH2B to form nucleosomes. In terms of tissue distribution, highly expressed in adult testis, mainly in spermatocytes.

The protein resides in the nucleus. It is found in the chromosome. Its function is as follows. Atypical histone H2A which replaces conventional H2A during late spermatogenesis and is involved in the replacement of histones to protamine in male germ cells. Core component of nucleosome: nucleosomes wrap and compact DNA into chromatin, limiting DNA accessibility to the cellular machineries which require DNA as a template. Nucleosomes containing H2AB1 only wrap 130 bp of DNA, compared to 147 bp for classical nucleosomes. In condensing spermatids, the heterodimer between H2AB1 and H2BC1/TH2B is loaded onto the nucleosomes and promotes loading of transition proteins (TNP1 and TNP2) onto the nucleosomes. Inclusion of the H2AB1-H2BC1/TH2B dimer into chromatin opens the nucleosomes, releasing the nucleosomal DNA ends and allowing the invasion of nucleosomes by transition proteins (TNP1 and TNP2). Then, transition proteins drive the recruitment and processing of protamines, which are responsible for histone eviction. The polypeptide is Histone H2A-Bbd type 1 (H2ab1) (Mus musculus (Mouse)).